Consider the following 86-residue polypeptide: U1-theraphotoxin-Pc1a (86 aa).

A signal peptide spans 1–21 (MMRVLIVTAVFTFFLVLTSSG). Positions 22–49 (HDEDNEQRNILEGMFLDRAIETPKGLEE) are excised as a propeptide. Cystine bridges form between cysteine 53/cysteine 70, cysteine 60/cysteine 75, and cysteine 69/cysteine 80. Valine 84 is modified (valine amide).

As to expression, expressed by the venom gland.

It localises to the secreted. Possesses strong antiplasmodial activity against the intra-erythrocyte stage of P.falciparum in vitro. IC(50) for inhibiting P.falciparum growth is 1.59 uM. Interacts with infected and healthy erythrocytes. Does not lyse erythrocytes, is not cytotoxic to nucleated mammalian cells, and does not inhibit neuromuscular function. Has neither antibacterial nor antifungal activity. The polypeptide is U1-theraphotoxin-Pc1a (Psalmopoeus cambridgei (Trinidad chevron tarantula)).